Consider the following 660-residue polypeptide: Threonine--tRNA ligase (660 aa).

Residues methionine 1–arginine 64 form the TGS domain. Residues aspartate 245–proline 547 are catalytic. Residues cysteine 341, histidine 392, and histidine 524 each contribute to the Zn(2+) site.

This sequence belongs to the class-II aminoacyl-tRNA synthetase family. As to quaternary structure, homodimer. It depends on Zn(2+) as a cofactor.

It localises to the cytoplasm. It carries out the reaction tRNA(Thr) + L-threonine + ATP = L-threonyl-tRNA(Thr) + AMP + diphosphate + H(+). Catalyzes the attachment of threonine to tRNA(Thr) in a two-step reaction: L-threonine is first activated by ATP to form Thr-AMP and then transferred to the acceptor end of tRNA(Thr). Also edits incorrectly charged L-seryl-tRNA(Thr). The protein is Threonine--tRNA ligase of Sinorhizobium medicae (strain WSM419) (Ensifer medicae).